The chain runs to 475 residues: Ankyrin repeat, SAM and basic leucine zipper domain-containing protein 1 (475 aa).

The segment at 1–25 (MAASALRGLPVAGGGESSESEDDGW) is disordered. A phosphoserine mark is found at Ser17, Ser18, and Ser20. ANK repeat units follow at residues 45–74 (EKKEKFKKAMTIGDVSLVQELLDSGISVDS), 78–107 (YGWTPLMYAASVANAELVRVLLDRGANASF), 110–144 (DKQSILITACSAHGSEEQILKCVELLLSRNADPNV), 148–177 (RLMTPIMYAARDGHTQVVALLVAHGAEVNT), 181–210 (NGYTALTWAARQGHKNIVLKLLELGANKML), and 214–243 (DGKMPSEIAKRNKHHEIFNLLSFTLNPLEG). Residues 272–334 (SYTAFGDLEV…KILAALKELQ (63 aa)) enclose the SAM domain.

Interacts with DDX4, PIWIL1, RANBP9 and TDRD1. As to expression, expressed exclusively in the testis and ovary and at higher levels in the adult testis compared with the adult ovary.

The protein localises to the cytoplasm. Plays a central role during spermatogenesis by repressing transposable elements and preventing their mobilization, which is essential for the germline integrity. Acts via the piRNA metabolic process, which mediates the repression of transposable elements during meiosis by forming complexes composed of piRNAs and Piwi proteins and governs the methylation and subsequent repression of transposons. Its association with pi-bodies suggests a participation in the primary piRNAs metabolic process. Required prior to the pachytene stage to facilitate the production of multiple types of piRNAs, including those associated with repeats involved in the regulation of retrotransposons. May act by mediating protein-protein interactions during germ cell maturation. This is Ankyrin repeat, SAM and basic leucine zipper domain-containing protein 1 from Homo sapiens (Human).